A 259-amino-acid polypeptide reads, in one-letter code: Phosphate import ATP-binding protein PstB (259 aa).

Positions 10–254 (AESRNLSFYY…PSRKETEDYI (245 aa)) constitute an ABC transporter domain. 43–50 (GPSGCGKS) is an ATP binding site.

Belongs to the ABC transporter superfamily. Phosphate importer (TC 3.A.1.7) family. As to quaternary structure, the complex is composed of two ATP-binding proteins (PstB), two transmembrane proteins (PstC and PstA) and a solute-binding protein (PstS).

It is found in the cell inner membrane. The catalysed reaction is phosphate(out) + ATP + H2O = ADP + 2 phosphate(in) + H(+). Its function is as follows. Part of the ABC transporter complex PstSACB involved in phosphate import. Responsible for energy coupling to the transport system. This Methylobacillus flagellatus (strain ATCC 51484 / DSM 6875 / VKM B-1610 / KT) protein is Phosphate import ATP-binding protein PstB.